The following is a 376-amino-acid chain: MGEEAAMATMESAYHDELAPAAAPAPAKGGGSKKKRKQQKREEKRKECRLVSYHELPDYMKENEFILDYYRSEWPILNALLSLFSWHNETINIWTHLLGFVLFFGLTVLHLGQYFPQVADLIGHLSWPISKVAENVSSNIGDVLSGAASFMQASPASSAGAMAAAWPVTAAAAATTRWPFFVFLAGAMFCLLSSAACHLLSCHSHRLNLFLIRLDYTGIAVMIVVSFFPPIYYIFQCEPRWQVVYLSAITAAGVATVYALMSPRLSAARYRAHRALLFVAMGLSGVVPAAHAVAVNWHEPRRNVTLAYEGAMAASYLAGTAFYLTRVPERWRPGMFDLCGHSHQIFHALVIAGALAHYAAAIVFIQARDEMGCPAP.

Topologically, residues 1-90 (MGEEAAMATM…LSLFSWHNET (90 aa)) are cytoplasmic. The disordered stretch occupies residues 20–46 (PAAAPAPAKGGGSKKKRKQQKREEKRK). A helical transmembrane segment spans residues 91–111 (INIWTHLLGFVLFFGLTVLHL). At 112-179 (GQYFPQVADL…AAAAATTRWP (68 aa)) the chain is on the extracellular side. A helical transmembrane segment spans residues 180 to 200 (FFVFLAGAMFCLLSSAACHLL). Residues 201–216 (SCHSHRLNLFLIRLDY) are Cytoplasmic-facing. A helical membrane pass occupies residues 217-237 (TGIAVMIVVSFFPPIYYIFQC). The Extracellular portion of the chain corresponds to 238–240 (EPR). A helical transmembrane segment spans residues 241–261 (WQVVYLSAITAAGVATVYALM). The Cytoplasmic portion of the chain corresponds to 262 to 274 (SPRLSAARYRAHR). A helical membrane pass occupies residues 275–295 (ALLFVAMGLSGVVPAAHAVAV). Residues 296–303 (NWHEPRRN) are Extracellular-facing. The helical transmembrane segment at 304 to 324 (VTLAYEGAMAASYLAGTAFYL) threads the bilayer. Residues 325–344 (TRVPERWRPGMFDLCGHSHQ) are Cytoplasmic-facing. A helical transmembrane segment spans residues 345–365 (IFHALVIAGALAHYAAAIVFI). At 366-376 (QARDEMGCPAP) the chain is on the extracellular side.

This sequence belongs to the ADIPOR family.

The protein localises to the membrane. May play a role in abiotic stress response. This is Heptahelical transmembrane protein ADIPOR1 (ADIPOR1) from Oryza sativa subsp. japonica (Rice).